Reading from the N-terminus, the 211-residue chain is LexA repressor (211 aa).

A DNA-binding region (H-T-H motif) is located at residues 28–48 (VREVGEAVGLSSSSTIHGHIE). Active-site for autocatalytic cleavage activity residues include S132 and K170.

Belongs to the peptidase S24 family. In terms of assembly, homodimer.

It carries out the reaction Hydrolysis of Ala-|-Gly bond in repressor LexA.. In terms of biological role, represses a number of genes involved in the response to DNA damage (SOS response), including recA and lexA. In the presence of single-stranded DNA, RecA interacts with LexA causing an autocatalytic cleavage which disrupts the DNA-binding part of LexA, leading to derepression of the SOS regulon and eventually DNA repair. The polypeptide is LexA repressor (Leuconostoc citreum (strain KM20)).